A 316-amino-acid chain; its full sequence is Apolipoprotein E (316 aa).

The N-terminal stretch at 1–18 is a signal peptide; the sequence is MKVLWVAVVVALLAGCQA. The O-linked (GalNAc...) threonine glycan is linked to T32. 8 consecutive repeat copies span residues 79 to 100, 101 to 122, 123 to 144, 145 to 166, 167 to 188, 189 to 210, 211 to 232, and 233 to 254. The segment at 79–254 is 8 X 22 AA approximate tandem repeats; sequence ALMEETMKEV…RLDKIRQQLE (176 aa). M142 is subject to Methionine sulfoxide. S146 is subject to Phosphoserine. The segment at 157-167 is LDL and other lipoprotein receptors binding; the sequence is HLRKLPKRLLR. Residue 161–164 participates in heparin binding; it reads LPKR. The tract at residues 209–289 is lipid-binding and lipoprotein association; the sequence is AATLSTLAGQ…SWFEPLVEDM (81 aa). O-linked (GalNAc...) threonine glycosylation occurs at T211. 228–235 is a heparin binding site; it reads RQKLHGRL. Positions 265–316 are homooligomerization; the sequence is NQMRLQAEAFQARLRSWFEPLVEDMQRQWAGLVEKVQLALRPSPTSPPSENH. Residues 277-289 are specificity for association with VLDL; it reads RLRSWFEPLVEDM. Residue T309 is glycosylated (O-linked (GalNAc...) threonine). Residue S310 is glycosylated (O-linked (GalNAc...) serine).

Belongs to the apolipoprotein A1/A4/E family. In terms of assembly, homotetramer. May interact with ABCA1; functionally associated with ABCA1 in the biogenesis of HDLs. May interact with APP/A4 amyloid-beta peptide; the interaction is extremely stable in vitro but its physiological significance is unclear. May interact with MAPT. May interact with MAP2. In the cerebrospinal fluid, interacts with secreted SORL1. Interacts with PMEL; this allows the loading of PMEL luminal fragment on ILVs to induce fibril nucleation. In terms of processing, APOE exists as multiple glycosylated and sialylated glycoforms within cells and in plasma. The extent of glycosylation and sialylation are tissue and context specific. Post-translationally, glycated in plasma VLDL. Phosphorylated by FAM20C in the extracellular medium.

Its subcellular location is the secreted. The protein localises to the extracellular space. The protein resides in the extracellular matrix. It is found in the extracellular vesicle. It localises to the endosome. Its subcellular location is the multivesicular body. Its function is as follows. APOE is an apolipoprotein, a protein associating with lipid particles, that mainly functions in lipoprotein-mediated lipid transport between organs via the plasma and interstitial fluids. APOE is a core component of plasma lipoproteins and is involved in their production, conversion and clearance. Apolipoproteins are amphipathic molecules that interact both with lipids of the lipoprotein particle core and the aqueous environment of the plasma. As such, APOE associates with chylomicrons, chylomicron remnants, very low density lipoproteins (VLDL) and intermediate density lipoproteins (IDL) but shows a preferential binding to high-density lipoproteins (HDL). It also binds a wide range of cellular receptors including the LDL receptor/LDLR and the very low-density lipoprotein receptor/VLDLR that mediate the cellular uptake of the APOE-containing lipoprotein particles. Finally, APOE also has a heparin-binding activity and binds heparan-sulfate proteoglycans on the surface of cells, a property that supports the capture and the receptor-mediated uptake of APOE-containing lipoproteins by cells. This is Apolipoprotein E (APOE) from Bos taurus (Bovine).